Consider the following 63-residue polypeptide: Large ribosomal subunit protein bL28c (63 aa).

Belongs to the bacterial ribosomal protein bL28 family.

The protein resides in the plastid. The protein localises to the chloroplast. This Pyropia yezoensis (Susabi-nori) protein is Large ribosomal subunit protein bL28c.